Reading from the N-terminus, the 344-residue chain is GTPase Obg (344 aa).

One can recognise an Obg domain in the interval 1–159; that stretch reads MKFLDLAKVY…RTIWLRLKLI (159 aa). Positions 160 to 327 constitute an OBG-type G domain; it reads ADVGLLGLPN…VLRALRARID (168 aa). Residues 166–173, 191–195, 212–215, 279–282, and 308–310 each bind GTP; these read GLPNAGKS, FTTLH, DIPG, NKID, and SGA. Mg(2+)-binding residues include serine 173 and threonine 193.

The protein belongs to the TRAFAC class OBG-HflX-like GTPase superfamily. OBG GTPase family. In terms of assembly, monomer. Mg(2+) serves as cofactor.

It localises to the cytoplasm. Functionally, an essential GTPase which binds GTP, GDP and possibly (p)ppGpp with moderate affinity, with high nucleotide exchange rates and a fairly low GTP hydrolysis rate. Plays a role in control of the cell cycle, stress response, ribosome biogenesis and in those bacteria that undergo differentiation, in morphogenesis control. This is GTPase Obg from Ruegeria pomeroyi (strain ATCC 700808 / DSM 15171 / DSS-3) (Silicibacter pomeroyi).